The following is a 160-amino-acid chain: D-aminoacyl-tRNA deacylase 2 (160 aa).

Residues 152-153 carry the Gly-transPro motif, allows the protein to recognize chirality of D-amino acids motif; sequence GP.

It belongs to the DTD family. Homodimer.

The protein localises to the cytoplasm. The enzyme catalyses a D-aminoacyl-tRNA + H2O = a tRNA + a D-alpha-amino acid + H(+). The catalysed reaction is glycyl-tRNA(Ala) + H2O = tRNA(Ala) + glycine + H(+). It carries out the reaction D-tyrosyl-tRNA(Tyr) + H2O = D-tyrosine + tRNA(Tyr). It catalyses the reaction L-alanyl-tRNA(Thr) + H2O = tRNA(Thr) + L-alanine + H(+). Its function is as follows. Deacylates mischarged D-aminoacyl-tRNAs. Also deacylates mischarged glycyl-tRNA(Ala), protecting cells against glycine mischarging by AlaRS. Probably acts by rejecting L-amino acids from its binding site rather than specific recognition of D-amino acids. Catalyzes the hydrolysis of D-tyrosyl-tRNA(Tyr), has no activity on correctly charged L-tyrosyl-tRNA(Tyr). By recycling D-aminoacyl-tRNA to D-amino acids and free tRNA molecules, this enzyme counteracts the toxicity associated with the formation of D-aminoacyl-tRNA entities in vivo and helps enforce protein L-homochirality. In contrast to DTD1, deacylates L-Ala mischarged on tRNA(Thr)(G4.U69) by alanine-tRNA ligase AARS. Can deacylate L-Ala due to a relaxed specificity for substrate chirality caused by the trans conformation of the Gly-Pro motif in the active site. Also hydrolyzes correctly charged, achiral, glycyl-tRNA(Gly) in vitro, although in vivo eef1a1a/EF-Tu may protect cognate achiral glycyl-tRNA(Gly) from DTD2-mediated deacetylation. The protein is D-aminoacyl-tRNA deacylase 2 (dtd2) of Danio rerio (Zebrafish).